A 378-amino-acid polypeptide reads, in one-letter code: 3-ketosteroid-9-alpha-monooxygenase, oxygenase component (378 aa).

Positions 26 to 128 constitute a Rieske domain; the sequence is WHCIGLAKDF…TMERNGVLFV (103 aa). Residues Cys67, His69, Cys86, and His89 each contribute to the [2Fe-2S] cluster site. The Fe cation site is built by Asn175, His181, His186, and Asp305.

Homotrimer. The two-component system 3-ketosteroid-9-alpha-monooxygenase is composed of an oxygenase component KshA and a reductase component KshB. Requires [2Fe-2S] cluster as cofactor. Fe cation serves as cofactor.

The catalysed reaction is androsta-1,4-diene-3,17-dione + 2 reduced [2Fe-2S]-[ferredoxin] + O2 + 2 H(+) = 9alpha-hydroxyandrosta-1,4-diene-3,17-dione + 2 oxidized [2Fe-2S]-[ferredoxin] + H2O. With respect to regulation, KSH activity is completely inhibited by zinc ions. KshA is specifically inhibited by Fe(3+), Co(2+), Zn(2+) and Ni(2+) ions. Functionally, in vitro, catalyzes the introduction of a 9alpha-hydroxyl moiety into the ring B of 3-ketosteroid substrates such as 1,4-androstadiene-3,17-dione (ADD), 4-androstene-3,17-dione (AD), 4-androstene-17beta-ol-3-one (testosterone), 4-pregnene-3,20-dione (progesterone), 19-nor-4-androstene-3,17-dione (nordion), 1-(5alpha)-androstene-3,17-dione, 5alpha-androstane-3,17-dione and 5beta-androstane-3,17-dione. KSH has the highest activity with 3-keto-delta4 steroid substrates. In Rhodococcus rhodochrous, this protein is 3-ketosteroid-9-alpha-monooxygenase, oxygenase component.